The following is a 400-amino-acid chain: Lysophospholipid transporter LplT (400 aa).

12 helical membrane passes run 19 to 39 (VIVA…ATLA), 53 to 73 (VLQM…GQIA), 91 to 111 (AGAA…LVGI), 139 to 159 (LMEA…GVLA), 164 to 184 (IAAL…NLFI), 195 to 213 (SWRL…VVLW), 227 to 247 (LFWG…PVAL), 257 to 277 (YLNA…AKLV), 281 to 301 (TVSR…IFSL), 304 to 324 (ALLP…FFVV), 352 to 372 (NSAM…GVPA), and 373 to 393 (VAIG…LWIW).

This sequence belongs to the major facilitator superfamily. LplT (TC 2.A.1.42) family.

The protein localises to the cell inner membrane. In terms of biological role, catalyzes the facilitated diffusion of 2-acyl-glycero-3-phosphoethanolamine (2-acyl-GPE) into the cell. The protein is Lysophospholipid transporter LplT of Salmonella typhi.